A 194-amino-acid chain; its full sequence is Thioredoxin O1, mitochondrial (194 aa).

A mitochondrion-targeting transit peptide spans 1–42; the sequence is MKGNWSIVRKVLHRQFSTLRSSTPSSRLSTSIRPLVLAPNSI. Residue Ser75 is modified to Phosphoserine. In terms of domain architecture, Thioredoxin spans 89–194; sequence VKSEEEFINA…LKNLMEQLYK (106 aa). Catalysis depends on nucleophile residues Cys118 and Cys121. A disulfide bond links Cys118 and Cys121.

The protein belongs to the thioredoxin family. Plant O-type subfamily.

It localises to the mitochondrion matrix. Functionally, thiol-disulfide oxidoreductase that may participate in various redox reactions. Possesses insulin disulfide bonds reducing activity. Reduced by thioredoxin reductases NTRA and NTRB. This chain is Thioredoxin O1, mitochondrial, found in Arabidopsis thaliana (Mouse-ear cress).